We begin with the raw amino-acid sequence, 121 residues long: Large ribosomal subunit protein bL19 (121 aa).

This sequence belongs to the bacterial ribosomal protein bL19 family.

In terms of biological role, this protein is located at the 30S-50S ribosomal subunit interface and may play a role in the structure and function of the aminoacyl-tRNA binding site. This is Large ribosomal subunit protein bL19 from Chloroherpeton thalassium (strain ATCC 35110 / GB-78).